Consider the following 133-residue polypeptide: Ribosome-binding factor A (133 aa).

This sequence belongs to the RbfA family. Monomer. Binds 30S ribosomal subunits, but not 50S ribosomal subunits or 70S ribosomes.

It localises to the cytoplasm. Functionally, one of several proteins that assist in the late maturation steps of the functional core of the 30S ribosomal subunit. Associates with free 30S ribosomal subunits (but not with 30S subunits that are part of 70S ribosomes or polysomes). Required for efficient processing of 16S rRNA. May interact with the 5'-terminal helix region of 16S rRNA. The polypeptide is Ribosome-binding factor A (Salmonella heidelberg (strain SL476)).